The primary structure comprises 475 residues: Aspartyl/glutamyl-tRNA(Asn/Gln) amidotransferase subunit B (475 aa).

It belongs to the GatB/GatE family. GatB subfamily. In terms of assembly, heterotrimer of A, B and C subunits.

The enzyme catalyses L-glutamyl-tRNA(Gln) + L-glutamine + ATP + H2O = L-glutaminyl-tRNA(Gln) + L-glutamate + ADP + phosphate + H(+). The catalysed reaction is L-aspartyl-tRNA(Asn) + L-glutamine + ATP + H2O = L-asparaginyl-tRNA(Asn) + L-glutamate + ADP + phosphate + 2 H(+). In terms of biological role, allows the formation of correctly charged Asn-tRNA(Asn) or Gln-tRNA(Gln) through the transamidation of misacylated Asp-tRNA(Asn) or Glu-tRNA(Gln) in organisms which lack either or both of asparaginyl-tRNA or glutaminyl-tRNA synthetases. The reaction takes place in the presence of glutamine and ATP through an activated phospho-Asp-tRNA(Asn) or phospho-Glu-tRNA(Gln). This chain is Aspartyl/glutamyl-tRNA(Asn/Gln) amidotransferase subunit B, found in Chromobacterium violaceum (strain ATCC 12472 / DSM 30191 / JCM 1249 / CCUG 213 / NBRC 12614 / NCIMB 9131 / NCTC 9757 / MK).